Reading from the N-terminus, the 275-residue chain is Elongation factor Ts (275 aa).

The involved in Mg(2+) ion dislocation from EF-Tu stretch occupies residues 76 to 79 (TDFV).

It belongs to the EF-Ts family.

It localises to the cytoplasm. Its function is as follows. Associates with the EF-Tu.GDP complex and induces the exchange of GDP to GTP. It remains bound to the aminoacyl-tRNA.EF-Tu.GTP complex up to the GTP hydrolysis stage on the ribosome. The chain is Elongation factor Ts from Rhodococcus jostii (strain RHA1).